The sequence spans 537 residues: 2-succinyl-5-enolpyruvyl-6-hydroxy-3-cyclohexene-1-carboxylate synthase (537 aa).

Belongs to the TPP enzyme family. MenD subfamily. In terms of assembly, homodimer. Requires Mg(2+) as cofactor. The cofactor is Mn(2+). Thiamine diphosphate is required as a cofactor.

The catalysed reaction is isochorismate + 2-oxoglutarate + H(+) = 5-enolpyruvoyl-6-hydroxy-2-succinyl-cyclohex-3-ene-1-carboxylate + CO2. It functions in the pathway quinol/quinone metabolism; 1,4-dihydroxy-2-naphthoate biosynthesis; 1,4-dihydroxy-2-naphthoate from chorismate: step 2/7. The protein operates within quinol/quinone metabolism; menaquinone biosynthesis. In terms of biological role, catalyzes the thiamine diphosphate-dependent decarboxylation of 2-oxoglutarate and the subsequent addition of the resulting succinic semialdehyde-thiamine pyrophosphate anion to isochorismate to yield 2-succinyl-5-enolpyruvyl-6-hydroxy-3-cyclohexene-1-carboxylate (SEPHCHC). In Nocardioides sp. (strain ATCC BAA-499 / JS614), this protein is 2-succinyl-5-enolpyruvyl-6-hydroxy-3-cyclohexene-1-carboxylate synthase.